A 168-amino-acid chain; its full sequence is Endoribonuclease YbeY (168 aa).

Zn(2+) is bound by residues His-132, His-136, and His-142.

Belongs to the endoribonuclease YbeY family. It depends on Zn(2+) as a cofactor.

It localises to the cytoplasm. Single strand-specific metallo-endoribonuclease involved in late-stage 70S ribosome quality control and in maturation of the 3' terminus of the 16S rRNA. This is Endoribonuclease YbeY from Clostridium perfringens (strain ATCC 13124 / DSM 756 / JCM 1290 / NCIMB 6125 / NCTC 8237 / Type A).